We begin with the raw amino-acid sequence, 330 residues long: Ketol-acid reductoisomerase (NADP(+)) (330 aa).

Positions 1 to 181 (MNAYYEQDAD…GGTKAGVIET (181 aa)) constitute a KARI N-terminal Rossmann domain. Residues 24–27 (YGSQ), R47, S50, S52, and 82–85 (DQYQ) each bind NADP(+). H107 is an active-site residue. G133 lines the NADP(+) pocket. Residues 182–327 (TFKNETETDL…SKLRDMMSWL (146 aa)) enclose the KARI C-terminal knotted domain. Mg(2+)-binding residues include D190, E194, E226, and E230. Position 251 (S251) interacts with substrate.

Belongs to the ketol-acid reductoisomerase family. Mg(2+) serves as cofactor.

The enzyme catalyses (2R)-2,3-dihydroxy-3-methylbutanoate + NADP(+) = (2S)-2-acetolactate + NADPH + H(+). It carries out the reaction (2R,3R)-2,3-dihydroxy-3-methylpentanoate + NADP(+) = (S)-2-ethyl-2-hydroxy-3-oxobutanoate + NADPH + H(+). The protein operates within amino-acid biosynthesis; L-isoleucine biosynthesis; L-isoleucine from 2-oxobutanoate: step 2/4. Its pathway is amino-acid biosynthesis; L-valine biosynthesis; L-valine from pyruvate: step 2/4. Functionally, involved in the biosynthesis of branched-chain amino acids (BCAA). Catalyzes an alkyl-migration followed by a ketol-acid reduction of (S)-2-acetolactate (S2AL) to yield (R)-2,3-dihydroxy-isovalerate. In the isomerase reaction, S2AL is rearranged via a Mg-dependent methyl migration to produce 3-hydroxy-3-methyl-2-ketobutyrate (HMKB). In the reductase reaction, this 2-ketoacid undergoes a metal-dependent reduction by NADPH to yield (R)-2,3-dihydroxy-isovalerate. The chain is Ketol-acid reductoisomerase (NADP(+)) from Chlorobium limicola (strain DSM 245 / NBRC 103803 / 6330).